The primary structure comprises 432 residues: Phosphomethylpyrimidine synthase (432 aa).

Residues Asn69, Met98, Tyr127, His163, 185 to 187 (SRG), 226 to 229 (DACR), and Glu265 contribute to the substrate site. Residue His269 participates in Zn(2+) binding. Position 292 (Tyr292) interacts with substrate. His333 is a Zn(2+) binding site. Residues Cys409, Cys412, and Cys416 each coordinate [4Fe-4S] cluster.

Belongs to the ThiC family. [4Fe-4S] cluster serves as cofactor.

It carries out the reaction 5-amino-1-(5-phospho-beta-D-ribosyl)imidazole + S-adenosyl-L-methionine = 4-amino-2-methyl-5-(phosphooxymethyl)pyrimidine + CO + 5'-deoxyadenosine + formate + L-methionine + 3 H(+). It participates in cofactor biosynthesis; thiamine diphosphate biosynthesis. Catalyzes the synthesis of the hydroxymethylpyrimidine phosphate (HMP-P) moiety of thiamine from aminoimidazole ribotide (AIR) in a radical S-adenosyl-L-methionine (SAM)-dependent reaction. The protein is Phosphomethylpyrimidine synthase of Pelotomaculum thermopropionicum (strain DSM 13744 / JCM 10971 / SI).